A 114-amino-acid chain; its full sequence is T cell receptor alpha variable 10 (114 aa).

Residues M1–G21 form the signal peptide. Positions N23 to S114 constitute an Ig-like domain. 2 N-linked (GlcNAc...) asparagine glycosylation sites follow: N39 and N45. The cysteines at positions 44 and 111 are disulfide-linked.

In terms of assembly, alpha-beta TR is a heterodimer composed of an alpha and beta chain; disulfide-linked. The alpha-beta TR is associated with the transmembrane signaling CD3 coreceptor proteins to form the TR-CD3 (TcR or TCR). The assembly of alpha-beta TR heterodimers with CD3 occurs in the endoplasmic reticulum where a single alpha-beta TR heterodimer associates with one CD3D-CD3E heterodimer, one CD3G-CD3E heterodimer and one CD247 homodimer forming a stable octameric structure. CD3D-CD3E and CD3G-CD3E heterodimers preferentially associate with TR alpha and TR beta chains, respectively. The association of the CD247 homodimer is the last step of TcR assembly in the endoplasmic reticulum and is required for transport to the cell surface.

It localises to the cell membrane. Functionally, v region of the variable domain of T cell receptor (TR) alpha chain that participates in the antigen recognition. Alpha-beta T cell receptors are antigen specific receptors which are essential to the immune response and are present on the cell surface of T lymphocytes. Recognize peptide-major histocompatibility (MH) (pMH) complexes that are displayed by antigen presenting cells (APC), a prerequisite for efficient T cell adaptive immunity against pathogens. Binding of alpha-beta TR to pMH complex initiates TR-CD3 clustering on the cell surface and intracellular activation of LCK that phosphorylates the ITAM motifs of CD3G, CD3D, CD3E and CD247 enabling the recruitment of ZAP70. In turn ZAP70 phosphorylates LAT, which recruits numerous signaling molecules to form the LAT signalosome. The LAT signalosome propagates signal branching to three major signaling pathways, the calcium, the mitogen-activated protein kinase (MAPK) kinase and the nuclear factor NF-kappa-B (NF-kB) pathways, leading to the mobilization of transcription factors that are critical for gene expression and essential for T cell growth and differentiation. The T cell repertoire is generated in the thymus, by V-(D)-J rearrangement. This repertoire is then shaped by intrathymic selection events to generate a peripheral T cell pool of self-MH restricted, non-autoaggressive T cells. Post-thymic interaction of alpha-beta TR with the pMH complexes shapes TR structural and functional avidity. The protein is T cell receptor alpha variable 10 of Homo sapiens (Human).